The chain runs to 396 residues: Elongation factor Tu 2 (396 aa).

Positions 10–206 (KPHVNVGTIG…TLDTYIPEPE (197 aa)) constitute a tr-type G domain. The tract at residues 19–26 (GHVDHGKT) is G1. 19–26 (GHVDHGKT) contributes to the GTP binding site. Residue Thr26 participates in Mg(2+) binding. Positions 60 to 64 (GITIN) are G2. Residues 81–84 (DCPG) form a G3 region. GTP is bound by residues 81 to 85 (DCPGH) and 136 to 139 (NKCD). Positions 136–139 (NKCD) are G4. The G5 stretch occupies residues 174–176 (SAL).

Belongs to the TRAFAC class translation factor GTPase superfamily. Classic translation factor GTPase family. EF-Tu/EF-1A subfamily. As to quaternary structure, monomer.

The protein resides in the cytoplasm. The catalysed reaction is GTP + H2O = GDP + phosphate + H(+). Functionally, GTP hydrolase that promotes the GTP-dependent binding of aminoacyl-tRNA to the A-site of ribosomes during protein biosynthesis. The chain is Elongation factor Tu 2 from Psychrobacter sp. (strain PRwf-1).